A 433-amino-acid polypeptide reads, in one-letter code: Serine--tRNA ligase (433 aa).

235–237 lines the L-serine pocket; it reads TSE. 266–268 is an ATP binding site; sequence RSE. Position 289 (Glu289) interacts with L-serine. Residue 353–356 coordinates ATP; that stretch reads EISS. Ser388 is an L-serine binding site.

It belongs to the class-II aminoacyl-tRNA synthetase family. Type-1 seryl-tRNA synthetase subfamily. Homodimer. The tRNA molecule binds across the dimer.

It is found in the cytoplasm. The enzyme catalyses tRNA(Ser) + L-serine + ATP = L-seryl-tRNA(Ser) + AMP + diphosphate + H(+). It carries out the reaction tRNA(Sec) + L-serine + ATP = L-seryl-tRNA(Sec) + AMP + diphosphate + H(+). It functions in the pathway aminoacyl-tRNA biosynthesis; selenocysteinyl-tRNA(Sec) biosynthesis; L-seryl-tRNA(Sec) from L-serine and tRNA(Sec): step 1/1. Functionally, catalyzes the attachment of serine to tRNA(Ser). Is also able to aminoacylate tRNA(Sec) with serine, to form the misacylated tRNA L-seryl-tRNA(Sec), which will be further converted into selenocysteinyl-tRNA(Sec). This is Serine--tRNA ligase from Burkholderia ambifaria (strain ATCC BAA-244 / DSM 16087 / CCUG 44356 / LMG 19182 / AMMD) (Burkholderia cepacia (strain AMMD)).